A 469-amino-acid polypeptide reads, in one-letter code: Sulfate adenylyltransferase subunit 1 (469 aa).

The 215-residue stretch at 22 to 236 (KDMLRVLTCG…LLNTVSVEQD (215 aa)) folds into the tr-type G domain. Residues 31–38 (GSVDDGKS) are G1. 31 to 38 (GSVDDGKS) is a GTP binding site. The G2 stretch occupies residues 89 to 93 (GITID). The G3 stretch occupies residues 110–113 (DTPG). Residues 110–114 (DTPGH) and 165–168 (NKMD) contribute to the GTP site. Positions 165 to 168 (NKMD) are G4. Positions 202 to 204 (SAL) are G5.

It belongs to the TRAFAC class translation factor GTPase superfamily. Classic translation factor GTPase family. CysN/NodQ subfamily. As to quaternary structure, heterodimer composed of CysD, the smaller subunit, and CysN.

It catalyses the reaction sulfate + ATP + H(+) = adenosine 5'-phosphosulfate + diphosphate. The protein operates within sulfur metabolism; hydrogen sulfide biosynthesis; sulfite from sulfate: step 1/3. With CysD forms the ATP sulfurylase (ATPS) that catalyzes the adenylation of sulfate producing adenosine 5'-phosphosulfate (APS) and diphosphate, the first enzymatic step in sulfur assimilation pathway. APS synthesis involves the formation of a high-energy phosphoric-sulfuric acid anhydride bond driven by GTP hydrolysis by CysN coupled to ATP hydrolysis by CysD. The sequence is that of Sulfate adenylyltransferase subunit 1 from Shewanella woodyi (strain ATCC 51908 / MS32).